Consider the following 143-residue polypeptide: MRLLGLDVGSKTVGVAISDPLGITAQELETIKIDESKFSFGMRQIRKLVRKYDVEGFVLGLPKNMDGSSGHSVERSKQYGERLKEKFDLPVHYMDERLTTVQADRILVQEAGVHDRVERKKVIDQMAAVLILQSYLEATRKDK.

Belongs to the YqgF nuclease family.

The protein resides in the cytoplasm. Functionally, could be a nuclease involved in processing of the 5'-end of pre-16S rRNA. In Lactobacillus gasseri (strain ATCC 33323 / DSM 20243 / BCRC 14619 / CIP 102991 / JCM 1131 / KCTC 3163 / NCIMB 11718 / NCTC 13722 / AM63), this protein is Putative pre-16S rRNA nuclease.